The sequence spans 371 residues: Chaperone protein DnaJ (371 aa).

The region spanning 5–69 (DYYEVLGLSK…QKRAQYDQFG (65 aa)) is the J domain. A CR-type zinc finger spans residues 133-215 (GKELNVEIPV…CHGSGKVRKR (83 aa)). 8 residues coordinate Zn(2+): Cys146, Cys149, Cys163, Cys166, Cys189, Cys192, Cys203, and Cys206. CXXCXGXG motif repeat units lie at residues 146-153 (CDTCKGSG), 163-170 (CKHCSGSG), 189-196 (CSHCSGTG), and 203-210 (CTTCHGSG).

It belongs to the DnaJ family. In terms of assembly, homodimer. Requires Zn(2+) as cofactor.

It is found in the cytoplasm. Its function is as follows. Participates actively in the response to hyperosmotic and heat shock by preventing the aggregation of stress-denatured proteins and by disaggregating proteins, also in an autonomous, DnaK-independent fashion. Unfolded proteins bind initially to DnaJ; upon interaction with the DnaJ-bound protein, DnaK hydrolyzes its bound ATP, resulting in the formation of a stable complex. GrpE releases ADP from DnaK; ATP binding to DnaK triggers the release of the substrate protein, thus completing the reaction cycle. Several rounds of ATP-dependent interactions between DnaJ, DnaK and GrpE are required for fully efficient folding. Also involved, together with DnaK and GrpE, in the DNA replication of plasmids through activation of initiation proteins. This chain is Chaperone protein DnaJ, found in Bacillus anthracis (strain A0248).